A 202-amino-acid polypeptide reads, in one-letter code: Imidazoleglycerol-phosphate dehydratase (202 aa).

This sequence belongs to the imidazoleglycerol-phosphate dehydratase family.

Its subcellular location is the cytoplasm. The catalysed reaction is D-erythro-1-(imidazol-4-yl)glycerol 3-phosphate = 3-(imidazol-4-yl)-2-oxopropyl phosphate + H2O. It participates in amino-acid biosynthesis; L-histidine biosynthesis; L-histidine from 5-phospho-alpha-D-ribose 1-diphosphate: step 6/9. This is Imidazoleglycerol-phosphate dehydratase from Corynebacterium efficiens (strain DSM 44549 / YS-314 / AJ 12310 / JCM 11189 / NBRC 100395).